Consider the following 589-residue polypeptide: uncharacterized protein (589 aa).

This is an uncharacterized protein from Bacillus anthracis.